The sequence spans 252 residues: MLSVKSIPAFNDNYIWLIHNNDNHCVVVDPGDATPVLECIKEHDFILDAILITHHHHDHIGGVPELVRQFPNVNVVGPENEPIPTLTHPVGDGDFVELFDEQFMVLGVPGHTNGHVAYIGDEKLFCGDALFSAGCGRLFEGTAEQMFNSLQKMAALPDETEVYCAHEYTASNLAFALAVEPDNDYLLRYREKVLHLRAHGKSTIPSTLQREKLINPFLRTSEANVKKSVASKVQDSTEVEIFTALRRWKDEF.

Residues H54, H56, D58, H59, H111, D128, and H166 each coordinate Zn(2+).

Belongs to the metallo-beta-lactamase superfamily. Glyoxalase II family. Monomer. It depends on Zn(2+) as a cofactor.

It carries out the reaction an S-(2-hydroxyacyl)glutathione + H2O = a 2-hydroxy carboxylate + glutathione + H(+). The protein operates within secondary metabolite metabolism; methylglyoxal degradation; (R)-lactate from methylglyoxal: step 2/2. Functionally, thiolesterase that catalyzes the hydrolysis of S-D-lactoyl-glutathione to form glutathione and D-lactic acid. This Aliivibrio fischeri (strain ATCC 700601 / ES114) (Vibrio fischeri) protein is Hydroxyacylglutathione hydrolase.